Reading from the N-terminus, the 347-residue chain is Quinolinate synthase (347 aa).

Residues H47 and S68 each contribute to the iminosuccinate site. Residue C113 participates in [4Fe-4S] cluster binding. Iminosuccinate-binding positions include 139–141 (YAN) and S156. C200 is a [4Fe-4S] cluster binding site. Iminosuccinate is bound by residues 226-228 (HPE) and T243. Residue C297 coordinates [4Fe-4S] cluster.

This sequence belongs to the quinolinate synthase family. Type 1 subfamily. The cofactor is [4Fe-4S] cluster.

The protein localises to the cytoplasm. It catalyses the reaction iminosuccinate + dihydroxyacetone phosphate = quinolinate + phosphate + 2 H2O + H(+). Its pathway is cofactor biosynthesis; NAD(+) biosynthesis; quinolinate from iminoaspartate: step 1/1. Its function is as follows. Catalyzes the condensation of iminoaspartate with dihydroxyacetone phosphate to form quinolinate. The chain is Quinolinate synthase from Salmonella paratyphi A (strain ATCC 9150 / SARB42).